Reading from the N-terminus, the 432-residue chain is Adenylosuccinate synthetase 2 (432 aa).

Residues 12-18 (GDEGKGR) and 40-42 (GHT) each bind GTP. The active-site Proton acceptor is the aspartate 13. Aspartate 13 and glycine 40 together coordinate Mg(2+). Residues 13–16 (DEGK), 38–41 (NAGH), threonine 128, arginine 142, glutamine 222, threonine 237, and arginine 301 contribute to the IMP site. The active-site Proton donor is the histidine 41. 297 to 303 (VNTGRPR) is a substrate binding site. Residues arginine 303, 329–331 (KLD), and 411–413 (TTG) contribute to the GTP site.

The protein belongs to the adenylosuccinate synthetase family. Homodimer. It depends on Mg(2+) as a cofactor.

The protein resides in the cytoplasm. The catalysed reaction is IMP + L-aspartate + GTP = N(6)-(1,2-dicarboxyethyl)-AMP + GDP + phosphate + 2 H(+). It participates in purine metabolism; AMP biosynthesis via de novo pathway; AMP from IMP: step 1/2. Functionally, plays an important role in the de novo pathway of purine nucleotide biosynthesis. Catalyzes the first committed step in the biosynthesis of AMP from IMP. This Burkholderia lata (strain ATCC 17760 / DSM 23089 / LMG 22485 / NCIMB 9086 / R18194 / 383) protein is Adenylosuccinate synthetase 2.